A 101-amino-acid polypeptide reads, in one-letter code: Signal recognition particle 19 kDa protein (101 aa).

Belongs to the SRP19 family. Part of the signal recognition particle protein translocation system, which is composed of SRP and FtsY. Archaeal SRP consists of a 7S RNA molecule of 300 nucleotides and two protein subunits: SRP54 and SRP19.

The protein resides in the cytoplasm. Its function is as follows. Involved in targeting and insertion of nascent membrane proteins into the cytoplasmic membrane. Binds directly to 7S RNA and mediates binding of the 54 kDa subunit of the SRP. In Methanosarcina mazei (strain ATCC BAA-159 / DSM 3647 / Goe1 / Go1 / JCM 11833 / OCM 88) (Methanosarcina frisia), this protein is Signal recognition particle 19 kDa protein.